The following is a 4349-amino-acid chain: Dynein heavy chain, cytoplasmic (4349 aa).

Residues 1-1907 (MEVTSAAAPS…YIKMANAKLN (1907 aa)) are stem. Coiled-coil stretches lie at residues 459-480 (WEEN…RNEK), 1178-1215 (LMKF…STAQ), 1266-1293 (SQWE…QAKI), 1334-1354 (ESRI…KEAL), 1560-1577 (YKEF…LNRV), and 1640-1670 (NIPN…EKER). AAA stretches follow at residues 1908 to 2133 (YGFE…VLVS), 2201 to 2459 (NAIR…FTTA), 2565 to 2814 (EVNT…WVRG), and 2908 to 3177 (TFCE…QGKV). Residue 1946–1953 (GPAGTGKT) participates in ATP binding. The stretch at 2194–2217 (ANLEALENAIRELAAERHLVVNEL) forms a coiled coil. ATP contacts are provided by residues 2239–2246 (GNSGSGKS), 2604–2611 (GPPGSGKT), and 2946–2953 (GVSGSGKT). 3 coiled-coil regions span residues 3186-3294 (LDFV…LAKA), 3420-3477 (GPLK…EMSR), and 3774-3807 (DNVI…VEEI). The tract at residues 3186 to 3477 (LDFVTQYIKL…TQAIKAEMSR (292 aa)) is stalk. 2 AAA regions span residues 3563–3792 (LSTA…EISA) and 4001–4213 (AERF…IVDT).

Belongs to the dynein heavy chain family. Consists of at least two heavy chains and a number of intermediate and light chains.

The protein resides in the cytoplasm. Its subcellular location is the cytoskeleton. Its function is as follows. Cytoplasmic dynein acts as a motor for the intracellular retrograde motility of vesicles and organelles along microtubules. Dynein has ATPase activity; the force-producing power stroke is thought to occur on release of ADP. The chain is Dynein heavy chain, cytoplasmic (DHC1) from Fusarium vanettenii (Neocosmospora pisi).